The chain runs to 144 residues: Deoxyuridine 5'-triphosphate nucleotidohydrolase (144 aa).

Substrate contacts are provided by residues 63 to 65, asparagine 76, and 80 to 82; these read RSG and TVD.

This sequence belongs to the dUTPase family. Mg(2+) is required as a cofactor.

It carries out the reaction dUTP + H2O = dUMP + diphosphate + H(+). It functions in the pathway pyrimidine metabolism; dUMP biosynthesis; dUMP from dCTP (dUTP route): step 2/2. In terms of biological role, this enzyme is involved in nucleotide metabolism: it produces dUMP, the immediate precursor of thymidine nucleotides and it decreases the intracellular concentration of dUTP so that uracil cannot be incorporated into DNA. The protein is Deoxyuridine 5'-triphosphate nucleotidohydrolase of Flavobacterium johnsoniae (strain ATCC 17061 / DSM 2064 / JCM 8514 / BCRC 14874 / CCUG 350202 / NBRC 14942 / NCIMB 11054 / UW101) (Cytophaga johnsonae).